The sequence spans 366 residues: Histidinol-phosphate aminotransferase (366 aa).

An N6-(pyridoxal phosphate)lysine modification is found at K228.

The protein belongs to the class-II pyridoxal-phosphate-dependent aminotransferase family. Histidinol-phosphate aminotransferase subfamily. As to quaternary structure, homodimer. Requires pyridoxal 5'-phosphate as cofactor.

It carries out the reaction L-histidinol phosphate + 2-oxoglutarate = 3-(imidazol-4-yl)-2-oxopropyl phosphate + L-glutamate. The protein operates within amino-acid biosynthesis; L-histidine biosynthesis; L-histidine from 5-phospho-alpha-D-ribose 1-diphosphate: step 7/9. In Corynebacterium glutamicum (strain R), this protein is Histidinol-phosphate aminotransferase.